Reading from the N-terminus, the 231-residue chain is Sensory transduction protein BceR (231 aa).

The Response regulatory domain occupies 3-116; the sequence is KIMLIEDDHT…VLVAKIQAIL (114 aa). Asp-52 is subject to 4-aspartylphosphate. The segment at residues 127 to 225 is a DNA-binding region (ompR/PhoB-type); it reads TQLKTWCGAT…KVGQGYMAKE (99 aa).

Phosphorylated by BceS.

The protein resides in the cytoplasm. In terms of biological role, member of the two-component regulatory system BceS/BceR involved in the regulation of bacitracin resistance. When activated by BceS, binds to the upstream region of the bceAB promoter and up-regulates the expression of these two genes. In Halalkalibacterium halodurans (strain ATCC BAA-125 / DSM 18197 / FERM 7344 / JCM 9153 / C-125) (Bacillus halodurans), this protein is Sensory transduction protein BceR (bceR).